The primary structure comprises 110 residues: UPF0060 membrane protein Francci3_2786 (110 aa).

4 helical membrane-spanning segments follow: residues 8–28 (LLFV…WQGV), 33–53 (GPVW…VATL), 62–82 (ILAA…VAVD), and 87–107 (DRYD…IMYA).

It belongs to the UPF0060 family.

Its subcellular location is the cell membrane. The protein is UPF0060 membrane protein Francci3_2786 of Frankia casuarinae (strain DSM 45818 / CECT 9043 / HFP020203 / CcI3).